The primary structure comprises 800 residues: Putative antiporter subunit mnhA2 (800 aa).

A run of 20 helical transmembrane segments spans residues 1–21 (MSLVYLLIAILVIMAMILLMS), 33–53 (IALVAPVISSIYFLIQIPSVA), 78–98 (GLSLMFSLIISLIGIAVFFYA), 118–138 (LFMFSMIGIVLSDNTILMYIF), 167–187 (FMITVFGGLALLVGFIMLYIM), 207–227 (GLFIPMIFMFLLGAFTKSAQF), 241–261 (TPVSAYLHSATMVKAGIFLLL), 273–293 (YVYIVTFVGLITMLFGSITAL), 300–320 (GILAYSTISQLGMIMAMVGIG), 331–351 (IASIYVFVLFGALFHLMNHAI), 387–407 (LVMTIAALSMAGVPFLNGFLS), 424–444 (FSLISMIAIVFVGVIASVFTF), 472–492 (PWLFSLPSLILMVLVPVIFFV), 527–547 (GFNIPLLLTIIIILLGSVLAI), 595–615 (IIMTLGIFMIIIGYGYIRIGL), 627–647 (GALEIILAIVTVTIGISLIFI), 651–671 (LTMVILNGVIGFVVTLFFIAM), 676–696 (LALTQLVVETITTILFIVSFS), 712–732 (IIKISVSLLMALIVVSLIFIT), and 768–788 (LDTLFEGLVLIITGLGIYTLL).

It belongs to the CPA3 antiporters (TC 2.A.63) subunit A family. May form a heterooligomeric complex that consists of seven subunits: mnhA2, mnhB2, mnhC2, mnhD2, mnhE2, mnhF2 and mnhG2.

It localises to the cell membrane. The sequence is that of Putative antiporter subunit mnhA2 (mnhA2) from Staphylococcus aureus (strain MSSA476).